The sequence spans 218 residues: Small ribosomal subunit protein uS3c (218 aa).

Residues 47 to 118 (IQKTIKISSG…KLNIAITRIA (72 aa)) form the KH type-2 domain.

Belongs to the universal ribosomal protein uS3 family. Part of the 30S ribosomal subunit.

Its subcellular location is the plastid. It localises to the chloroplast. The protein is Small ribosomal subunit protein uS3c (rps3) of Lotus japonicus (Lotus corniculatus var. japonicus).